The chain runs to 206 residues: LexA repressor (206 aa).

Positions 28–48 (RAEIATRLGFKSANAAEEHLK) form a DNA-binding region, H-T-H motif. Catalysis depends on for autocatalytic cleavage activity residues S123 and K160.

This sequence belongs to the peptidase S24 family. As to quaternary structure, homodimer.

The catalysed reaction is Hydrolysis of Ala-|-Gly bond in repressor LexA.. Represses a number of genes involved in the response to DNA damage (SOS response), including recA and lexA. In the presence of single-stranded DNA, RecA interacts with LexA causing an autocatalytic cleavage which disrupts the DNA-binding part of LexA, leading to derepression of the SOS regulon and eventually DNA repair. This Shewanella sp. (strain MR-4) protein is LexA repressor.